The chain runs to 326 residues: Nicotianamine synthase 2 (326 aa).

This sequence belongs to the nicotianamine synthase (NAS)-like family. As to expression, expressed in roots.

The enzyme catalyses 3 S-adenosyl-L-methionine = nicotianamine + 3 S-methyl-5'-thioadenosine + 3 H(+). Functionally, synthesizes nicotianamine, a polyamine that is the first intermediate in the synthesis of the phytosiderophores of the mugineic acid type found in gramineae which serve as a sensor for the physiological iron status within the plant, and/or might be involved in the transport of iron. The chain is Nicotianamine synthase 2 (NAS2) from Oryza sativa subsp. indica (Rice).